The chain runs to 500 residues: Probable cation transporter HKT1;4 (500 aa).

Over 1 to 12 the chain is Cytoplasmic; sequence MPTSRRALAGGA. 2 helical membrane passes run 13 to 33 and 74 to 94; these read LSMHVAYFLAISCLGYGLLGV and LVVLTVLMLLGGEVFVSLVGL. Over 95–156 the chain is Cytoplasmic; that stretch reads ASKWSKLRSD…ADTLRHNAVR (62 aa). The interval 121 to 145 is disordered; the sequence is ADIDGGDVENPTSSGEEAASRRRPM. 2 helical membrane-spanning segments follow: residues 157 to 177 and 239 to 259; these read ALFYIVLAIFAVVHVVGAVAV and VLAGNTLFAPLLAACVWAAAA. Residues 260 to 290 lie on the Cytoplasmic side of the membrane; that stretch reads ATRREELVEMAREGGRAAAAGYAHLMPARRC. Transmembrane regions (helical) follow at residues 291–311 and 346–366; these read WMLAATVAAFVAVLMALVCGM and LSILAPAILVLFVLMMYLPPY. The Cytoplasmic segment spans residues 367-390; it reads TTWFPFEENSTTKDSNAENQGIRL. 2 helical membrane passes run 391 to 411 and 464 to 484; these read LESTLLSQLSYLTIFVIAICI and GFVGRWSDSGKLILIFVMFFG. Topologically, residues 485 to 500 are cytoplasmic; that stretch reads RLKKFSMKGGKAWKLS.

The protein belongs to the TrkH potassium transport family. HKT (TC 2.A.38.3) subfamily.

Its subcellular location is the membrane. Its function is as follows. Probable cation transporter. May be involved in regulation of potassium-sodium homeostasis. The polypeptide is Probable cation transporter HKT1;4 (Oryza sativa subsp. japonica (Rice)).